Reading from the N-terminus, the 183-residue chain is MENGAVYSPTTEEDPGPARGPRSGLAAYFFMGRLPLLRRVLKGLQLLLSLLAFICEEVVSQCTLCGGLYFFEFVSCSAFLLSLLILIVYCTPFYERVDTTKVKSSDFYITLGTGCVFLLASIIFVSTHDRTSAEIAAIVFGFIASFMFLLDFITMLYEKRQESQLRKPENTTRAEALTEPLNA.

Met1 carries the post-translational modification N-acetylmethionine. Residues 1–39 (MENGAVYSPTTEEDPGPARGPRSGLAAYFFMGRLPLLRR) lie on the Cytoplasmic side of the membrane. Phosphoserine is present on Ser8. The MARVEL domain occupies 33–160 (RLPLLRRVLK…DFITMLYEKR (128 aa)). A helical membrane pass occupies residues 40–60 (VLKGLQLLLSLLAFICEEVVS). At 61 to 67 (QCTLCGG) the chain is on the extracellular side. Residues 68-88 (LYFFEFVSCSAFLLSLLILIV) traverse the membrane as a helical segment. Residues 89 to 106 (YCTPFYERVDTTKVKSSD) are Cytoplasmic-facing. The helical transmembrane segment at 107–127 (FYITLGTGCVFLLASIIFVST) threads the bilayer. Residues 128–134 (HDRTSAE) are Extracellular-facing. Residues 135-155 (IAAIVFGFIASFMFLLDFITM) traverse the membrane as a helical segment. Over 156–183 (LYEKRQESQLRKPENTTRAEALTEPLNA) the chain is Cytoplasmic. Thr171 is modified (phosphothreonine).

It belongs to the chemokine-like factor family. Interacts with PD-L1/CD274 (via transmembrane domain); the interaction is direct. Interacts with CMTM4. Interacts with CD58, ARG1, ENO1 and TMPO. In terms of tissue distribution, expressed in the leukocytes, placenta and testis.

Its subcellular location is the cell membrane. The protein localises to the early endosome membrane. It is found in the recycling endosome membrane. Its function is as follows. Master regulator of recycling and plasma membrane expression of PD-L1/CD274, an immune inhibitory ligand critical for immune tolerance to self and antitumor immunity. Associates with both constitutive and IFNG-induced PD-L1/CD274 at recycling endosomes, where it protects PD-L1/CD274 from being targeted for lysosomal degradation, likely by preventing its STUB1-mediated ubiquitination. May stabilize PD-L1/CD274 expression on antigen presenting cells and potentiates inhibitory signaling by PDCD1/CD279, its receptor on T-cells, ultimately triggering T-cell anergy. The polypeptide is CKLF-like MARVEL transmembrane domain-containing protein 6 (Homo sapiens (Human)).